A 225-amino-acid chain; its full sequence is Redox-sensing transcriptional repressor Rex (225 aa).

A DNA-binding region (H-T-H motif) is located at residues 16 to 55; sequence IYYRYLNILLDADKKRVSSTELSEAVKVDSATIRRDFSYF. 90 to 95 serves as a coordination point for NAD(+); sequence GVGNLG.

The protein belongs to the transcriptional regulatory Rex family. As to quaternary structure, homodimer.

The protein resides in the cytoplasm. In terms of biological role, modulates transcription in response to changes in cellular NADH/NAD(+) redox state. The protein is Redox-sensing transcriptional repressor Rex of Lactiplantibacillus plantarum (strain ATCC BAA-793 / NCIMB 8826 / WCFS1) (Lactobacillus plantarum).